The sequence spans 216 residues: ATP-dependent Clp protease proteolytic subunit (216 aa).

The Nucleophile role is filled by Ser-101. Residue His-126 is part of the active site.

It belongs to the peptidase S14 family. As to quaternary structure, component of the chloroplastic Clp protease core complex.

It localises to the plastid. It is found in the chloroplast stroma. The enzyme catalyses Hydrolysis of proteins to small peptides in the presence of ATP and magnesium. alpha-casein is the usual test substrate. In the absence of ATP, only oligopeptides shorter than five residues are hydrolyzed (such as succinyl-Leu-Tyr-|-NHMec, and Leu-Tyr-Leu-|-Tyr-Trp, in which cleavage of the -Tyr-|-Leu- and -Tyr-|-Trp bonds also occurs).. Cleaves peptides in various proteins in a process that requires ATP hydrolysis. Has a chymotrypsin-like activity. Plays a major role in the degradation of misfolded proteins. The protein is ATP-dependent Clp protease proteolytic subunit of Oryza nivara (Indian wild rice).